The primary structure comprises 493 residues: Cytochrome c-552 (493 aa).

The signal sequence occupies residues 1–25; sequence MEKKLKSWQGWLLSGGSMVVVFVLG. Position 116 (His116) interacts with heme c. Heme-binding residues include Cys144, Cys147, and Lys148. Heme c contacts are provided by Cys182, Cys185, His186, Cys224, Cys227, and His228. Ca(2+) is bound by residues Glu230, Tyr231, Lys276, and Gln278. Tyr231 contacts substrate. His279 contributes to the substrate binding site. Positions 290, 297, 300, 301, 315, 328, 331, 332, and 407 each coordinate heme c.

It belongs to the cytochrome c-552 family. Ca(2+) is required as a cofactor. Heme c serves as cofactor.

It is found in the periplasm. The catalysed reaction is 6 Fe(III)-[cytochrome c] + NH4(+) + 2 H2O = 6 Fe(II)-[cytochrome c] + nitrite + 8 H(+). Its pathway is nitrogen metabolism; nitrate reduction (assimilation). In terms of biological role, catalyzes the reduction of nitrite to ammonia, consuming six electrons in the process. The polypeptide is Cytochrome c-552 (Bacteroides thetaiotaomicron (strain ATCC 29148 / DSM 2079 / JCM 5827 / CCUG 10774 / NCTC 10582 / VPI-5482 / E50)).